Reading from the N-terminus, the 168-residue chain is Putative gustatory receptor clone PTE03 (168 aa).

Residues 1–25 (TTVPKMLINLQKQNKAISYAGCITQ) are Extracellular-facing. Cys22 and Cys104 are joined by a disulfide. The chain crosses the membrane as a helical span at residues 26 to 45 (LSFVLLFAGMENFLLAAMAY). Residues 46–67 (DRYVAICKPLRYTAIMKAHLCL) are Cytoplasmic-facing. A helical membrane pass occupies residues 68–88 (VMTLLSLCISIVDALLHGLMI). Residues 89-121 (LRLSFCTFLEIPHYFCELYQVIKLSCSDTLINN) are Extracellular-facing. The helical transmembrane segment at 122–143 (ILVYTMTSTLGGVPLGGIIFSY) threads the bilayer. The Cytoplasmic portion of the chain corresponds to 144–165 (FKIISSILRMPSSGSRHRAFST). Residues 166–168 (CGS) form a helical membrane-spanning segment.

The protein belongs to the G-protein coupled receptor 1 family. As to expression, tongue specific.

It localises to the cell membrane. Functionally, possible taste receptor. In Rattus norvegicus (Rat), this protein is Putative gustatory receptor clone PTE03 (Olr1145).